A 363-amino-acid polypeptide reads, in one-letter code: Ankyrin repeat domain-containing protein 40 (363 aa).

M1 is subject to N-acetylmethionine. ANK repeat units follow at residues 9–38 and 43–72; these read EQQERLREAAALGDIREVQKLVESGVDVNS and NGWTCLHWACKRNHGQVVSYLLQSGADREI. Residues 135–167 are disordered; it reads DSTQLQNGGPSPPPVSPPADSSPPLLPPTETPL. Pro residues predominate over residues 144 to 164; sequence PSPPPVSPPADSSPPLLPPTE. Residue S176 is modified to Phosphoserine.

The polypeptide is Ankyrin repeat domain-containing protein 40 (Ankrd40) (Mus musculus (Mouse)).